Reading from the N-terminus, the 217-residue chain is Probable transaldolase (217 aa).

The Schiff-base intermediate with substrate role is filled by K83.

It belongs to the transaldolase family. Type 3B subfamily.

Its subcellular location is the cytoplasm. It carries out the reaction D-sedoheptulose 7-phosphate + D-glyceraldehyde 3-phosphate = D-erythrose 4-phosphate + beta-D-fructose 6-phosphate. It functions in the pathway carbohydrate degradation; pentose phosphate pathway; D-glyceraldehyde 3-phosphate and beta-D-fructose 6-phosphate from D-ribose 5-phosphate and D-xylulose 5-phosphate (non-oxidative stage): step 2/3. Transaldolase is important for the balance of metabolites in the pentose-phosphate pathway. The protein is Probable transaldolase of Caulobacter sp. (strain K31).